The chain runs to 184 residues: UPF0398 protein BCAH820_1652 (184 aa).

It belongs to the UPF0398 family.

This Bacillus cereus (strain AH820) protein is UPF0398 protein BCAH820_1652.